The sequence spans 879 residues: Leucine--tRNA ligase (879 aa).

The 'HIGH' region motif lies at Pro43–His53. Residues Lys636–Ser640 carry the 'KMSKS' region motif. Position 639 (Lys639) interacts with ATP.

The protein belongs to the class-I aminoacyl-tRNA synthetase family.

It is found in the cytoplasm. It carries out the reaction tRNA(Leu) + L-leucine + ATP = L-leucyl-tRNA(Leu) + AMP + diphosphate. This is Leucine--tRNA ligase from Afipia carboxidovorans (strain ATCC 49405 / DSM 1227 / KCTC 32145 / OM5) (Oligotropha carboxidovorans).